The following is a 317-amino-acid chain: Ribosomal protein L11 methyltransferase (317 aa).

Positions 158, 179, 201, and 244 each coordinate S-adenosyl-L-methionine.

This sequence belongs to the methyltransferase superfamily. PrmA family.

The protein resides in the cytoplasm. It carries out the reaction L-lysyl-[protein] + 3 S-adenosyl-L-methionine = N(6),N(6),N(6)-trimethyl-L-lysyl-[protein] + 3 S-adenosyl-L-homocysteine + 3 H(+). Methylates ribosomal protein L11. This Streptococcus mutans serotype c (strain ATCC 700610 / UA159) protein is Ribosomal protein L11 methyltransferase.